The following is a 488-amino-acid chain: Bifunctional protein NifU/MnmA (488 aa).

The segment at 1-130 (MPERYGPRVI…DYWSRQGDAL (130 aa)) is nifU-like protein. A tRNA-specific 2-thiouridylase MnmA region spans residues 143-488 (RRGVVAAMSG…GGGIIARRDA (346 aa)). Residues 149-156 (AMSGGVDS) and phenylalanine 175 each bind ATP. The active-site Nucleophile is cysteine 240. Cysteine 240 and cysteine 333 are oxidised to a cystine. Residue glycine 264 participates in ATP binding. The interval 283–285 (KDQ) is interaction with tRNA. Residue cysteine 333 is the Cysteine persulfide intermediate of the active site. The tract at residues 433–434 (RY) is interaction with tRNA.

The protein in the N-terminal section; belongs to the NifU family. In the C-terminal section; belongs to the MnmA/TRMU family.

Its subcellular location is the cytoplasm. It catalyses the reaction S-sulfanyl-L-cysteinyl-[protein] + uridine(34) in tRNA + AH2 + ATP = 2-thiouridine(34) in tRNA + L-cysteinyl-[protein] + A + AMP + diphosphate + H(+). Its function is as follows. May be involved in the formation or repair of [Fe-S] clusters present in iron-sulfur proteins. Functionally, catalyzes the 2-thiolation of uridine at the wobble position (U34) of tRNA, leading to the formation of s(2)U34. The sequence is that of Bifunctional protein NifU/MnmA (nifU/mnmA) from Rubrobacter xylanophilus (strain DSM 9941 / JCM 11954 / NBRC 16129 / PRD-1).